Consider the following 174-residue polypeptide: Adipose-secreted signaling protein (174 aa).

Belongs to the ADISSP family.

Its subcellular location is the secreted. In terms of biological role, may be involved in thermogenesis and glucose homeostasis. The protein is Adipose-secreted signaling protein of Xenopus tropicalis (Western clawed frog).